Consider the following 113-residue polypeptide: MAGVGAAFRRLGALSGAGALGLASYGAHGAQFPDAYGKELFDKANKHHFLHSLALLGVPSCRKPVWAGLLLASGTTLFCTSFYYQALSGDTSIQTLGPVGGSLLILGWLALAF.

Residues 1–29 (MAGVGAAFRRLGALSGAGALGLASYGAHG) form the signal peptide. At 30 to 63 (AQFPDAYGKELFDKANKHHFLHSLALLGVPSCRK) the chain is on the extracellular side. An N6-acetyllysine modification is found at K43. A helical transmembrane segment spans residues 64–84 (PVWAGLLLASGTTLFCTSFYY). The Cytoplasmic segment spans residues 85–92 (QALSGDTS). Residues 93-113 (IQTLGPVGGSLLILGWLALAF) traverse the membrane as a helical segment.

Belongs to the TMEM256 family.

It is found in the membrane. The polypeptide is Transmembrane protein 256 (Tmem256) (Mus musculus (Mouse)).